The following is a 667-amino-acid chain: Phosphomethylpyrimidine synthase (667 aa).

Substrate is bound by residues Asn-235, Met-264, Tyr-293, His-329, 349–351, 390–393, and Glu-429; these read SRG and DGMR. Residue His-433 coordinates Zn(2+). Substrate is bound at residue Tyr-456. His-497 contacts Zn(2+). [4Fe-4S] cluster is bound by residues Cys-577, Cys-580, and Cys-585. The interval 618 to 642 is disordered; the sequence is DSYTGSESDTAKRASQREQGMAQMS.

It belongs to the ThiC family. In terms of assembly, homodimer. [4Fe-4S] cluster is required as a cofactor.

It carries out the reaction 5-amino-1-(5-phospho-beta-D-ribosyl)imidazole + S-adenosyl-L-methionine = 4-amino-2-methyl-5-(phosphooxymethyl)pyrimidine + CO + 5'-deoxyadenosine + formate + L-methionine + 3 H(+). It functions in the pathway cofactor biosynthesis; thiamine diphosphate biosynthesis. In terms of biological role, catalyzes the synthesis of the hydroxymethylpyrimidine phosphate (HMP-P) moiety of thiamine from aminoimidazole ribotide (AIR) in a radical S-adenosyl-L-methionine (SAM)-dependent reaction. In Shewanella pealeana (strain ATCC 700345 / ANG-SQ1), this protein is Phosphomethylpyrimidine synthase.